The sequence spans 124 residues: Splicing factor 3B subunit 6-like protein (124 aa).

Residues 16–29 form an interaction with pre-mRNA branch site region; the sequence is EVNRVLYVRNLPFN. Residues 19–94 form the RRM domain; the sequence is RVLYVRNLPF…RYLIVLYYQH (76 aa).

It localises to the nucleus. In terms of biological role, may be necessary for the splicing of pre-mRNA. This chain is Splicing factor 3B subunit 6-like protein, found in Arabidopsis thaliana (Mouse-ear cress).